The primary structure comprises 412 residues: COP9 signalosome complex subunit 4 (412 aa).

The 163-residue stretch at 216-378 (EAAQRYYELS…GILHFEDSNP (163 aa)) folds into the PCI domain.

This sequence belongs to the CSN4 family. As to quaternary structure, component of the CSN complex, probably composed of csn-1, csn-2, csn-3, csn-4, csn-5, csn-6 and csn-7. Within the complex it probably interacts directly with csn-2 and csn-4. In the complex, it probably interacts directly with csn-1, csn-2, csn-3 and csn-6. Interacts with itself.

It is found in the cytoplasm. The protein resides in the nucleus. Component of the COP9 signalosome complex (CSN), a complex involved in various cellular and developmental processes. The CSN complex is an essential regulator of the ubiquitin (Ubl) conjugation pathway by mediating the deneddylation of the cullin subunits of the SCF-type E3 ligase complexes, leading to decrease the Ubl ligase activity of SCF. The CSN complex plays an essential role in embryogenesis and oogenesis and is required to regulate microtubule stability in the early embryo. Mediates mei-3/katanin targeting for degradation at the meiosis to mitosis transition via deneddylation of cul-3. This is COP9 signalosome complex subunit 4 (csn-4) from Caenorhabditis elegans.